A 191-amino-acid polypeptide reads, in one-letter code: Early nodulin-like protein 8 (191 aa).

Positions 1-22 (MGVMSLSKTMVVVVLQVMILLG) are cleaved as a signal peptide. The region spanning 31-133 (TLYKVGDLDA…YQKLLVSVGT (103 aa)) is the Phytocyanin domain. An intrachain disulfide couples cysteine 87 to cysteine 121. N-linked (GlcNAc...) asparagine glycosylation is found at asparagine 104 and asparagine 108. The GPI-anchor amidated serine moiety is linked to residue serine 165. The propeptide at 166–191 (SASSSLISAFSTVAASLACAVVGAIM) is removed in mature form.

This sequence belongs to the early nodulin-like (ENODL) family. Mostly expressed in seedlings and roots, and, to a lower extent, in leaves, flowers, stems and seeds.

The protein localises to the cell membrane. May act as a carbohydrate transporter. The chain is Early nodulin-like protein 8 from Arabidopsis thaliana (Mouse-ear cress).